The following is a 102-amino-acid chain: Parathymosin (102 aa).

The tract at residues 1 to 102 (MSEKSVEAAA…RQKTENGASA (102 aa)) is disordered. S2 is subject to N-acetylserine. S2 bears the Phosphoserine mark. The residue at position 4 (K4) is an N6-acetyllysine. A phosphoserine mark is found at S5 and S13. Over residues 13–37 (SAKDLKEKKEKVEEKAGRKERKKEV) the composition is skewed to basic and acidic residues. K15 carries the N6-acetyllysine modification. The span at 38-76 (VEEEENGAEEEEEETAEDGEEEDDGDEEDEEEEEEEDEG) shows a compositional bias: acidic residues. Phosphothreonine is present on T52. Residue K92 is modified to N6-acetyllysine.

Belongs to the pro/parathymosin family.

Parathymosin may mediate immune function by blocking the effect of prothymosin alpha which confers resistance to certain opportunistic infections. This is Parathymosin (PTMS) from Bos taurus (Bovine).